A 916-amino-acid polypeptide reads, in one-letter code: MLWARGRQPDHRIRMSQQTTIRKLAELVNTPVDKLLVQLAEAGMKFSGPDQVVTSTEKMKLLGFLRRTHGKADTPAEAASEAAKKITLNRRKLQEVTVNAGRTKTTVNVEVRQKRTYVKSDNEGSGRAAPMTPDEERADILAKLAASRQRNLDEQQRLAESDRARDEAIQRKRDEEQAAKDRVEAERKAAEEAAAAASAPAPVAAAPAPSSAPAARAPSSPSSAPRPARPAGASPASRPATPARPDDRNNAAKHKTRGSHVMVAGVEDDDATKRFAGQLHLSAADRARRSNVRGKPTGRPGSSSSRRNDGGRGSNQSNSGPHGFERPTAPVVREVAIGETITVADLAQKLALKGGDVVKALFKMGVMATITQSIDHDTAALVTEELGHKAVRADNADFEDALLAHAEDAQGETTSRPPVVTIMGHVDHGKTSLLDYIRRTKIASGEAGGITQHIGAYHVETGRGVISFLDTPGHAAFTSMRARGAKITDIVVLVVAADDGVMPQTKEAVAHAKAAGVPLIVAVNKIDKAGADPLRVKNELLAENVVAEDFGGDTQFIEVSAKVGTGVDTLLDAISLQAEVLELKAVADGRASGTVIESSLDKGRGPVATVLVQQGALKRGDYLVCGIQYGRVRALFDETGHQPASAGPSIPVQVLGLSGVPEAGDDFVVVDDERLAKDVAQQRETKRRESRLVASATNRMEDILAQMGKGEGQQVLNLVIKADVQGSVEALKQSLVALSNDDIRINVIHSGVGGITESDANSAAASKATIIGFNVRADASARKIVESNGIDLRYFSIIYDVIDQVKQVASGLLGVEIREEIIGIAQVRDVFRSSKFGAVAGCMIIEGVVKRSKPIRVLRDSVVVFEGELESLRRFKENVDEVRNGTECGIGVKAYNDVKAGDQIECFERIEVARTL.

The segment covering 151–191 has biased composition (basic and acidic residues); that stretch reads NLDEQQRLAESDRARDEAIQRKRDEEQAAKDRVEAERKAAE. Disordered stretches follow at residues 151–262 and 280–328; these read NLDE…SHVM and HLSA…ERPT. Composition is skewed to low complexity over residues 192–243 and 293–305; these read EAAA…ATPA and RGKP…SSSS. Residues 415 to 584 form the tr-type G domain; sequence SRPPVVTIMG…SLQAEVLELK (170 aa). Residues 424–431 are G1; it reads GHVDHGKT. 424-431 provides a ligand contact to GTP; the sequence is GHVDHGKT. Residues 449-453 form a G2 region; it reads GITQH. The tract at residues 470–473 is G3; it reads DTPG. GTP-binding positions include 470-474 and 524-527; these read DTPGH and NKID. Positions 524–527 are G4; it reads NKID. The interval 560–562 is G5; sequence SAK.

This sequence belongs to the TRAFAC class translation factor GTPase superfamily. Classic translation factor GTPase family. IF-2 subfamily.

It localises to the cytoplasm. One of the essential components for the initiation of protein synthesis. Protects formylmethionyl-tRNA from spontaneous hydrolysis and promotes its binding to the 30S ribosomal subunits. Also involved in the hydrolysis of GTP during the formation of the 70S ribosomal complex. This chain is Translation initiation factor IF-2, found in Xanthomonas campestris pv. campestris (strain B100).